Consider the following 572-residue polypeptide: MPQISRQEYAGLFGPTTGDKIRLGDTNLFIEIEKDLRGYGEESVYGGGKSLRDGMGANNNLTRDNGVLDLVITNVTIVDARLGVIKADVGIRDGKIAGIGKSGNPGVMDGVTQGMVVGVSTDAISGEHLILTAAGIDSHIHLISPQQAYHALSNGVATFFGGGIGPTDGTNGTTVTPGPWNIRQMLRSIEGLPVNVGILGKGNSYGRGPLLEQAIAGVVGYKVHEDWGATANALRHALRMADEVDIQVSVHTDSLNECGYVEDTIDAFEGRTIHTFHTEGAGGGHAPDIIRVASQTNVLPSSTNPTLPYGVNSQAELFDMIMVCHNLNPNVPADVSFAESRVRPETIAAENVLHDMGVISMFSSDSQAMGRVGENWLRILQTADAMKAARGKLPEDAAGNDNFRVLRYVAKITINPAITQGVSHVIGSVEVGKMADLVLWDPRFFGAKPKMVIKGGMINWAAMGDPNASLPTPQPVFYRPMFGAMGKTLQDTCVTFVSQAALDDGVKEKAGLDRQVIAVKNCRTISKRDLVRNDQTPNIEVDPETFAVKVDGVHATCEPIATASMNQRYFFG.

The Urease domain occupies Ala-134 to Gly-572. The Ni(2+) site is built by His-139, His-141, and Lys-222. Residue Lys-222 is modified to N6-carboxylysine. His-224 provides a ligand contact to substrate. 2 residues coordinate Ni(2+): His-251 and His-277. The Proton donor role is filled by His-325. Residue Asp-365 participates in Ni(2+) binding.

This sequence belongs to the metallo-dependent hydrolases superfamily. Urease alpha subunit family. In terms of assembly, heterotrimer of UreA (gamma), UreB (beta) and UreC (alpha) subunits. Three heterotrimers associate to form the active enzyme. Ni cation serves as cofactor. Post-translationally, carboxylation allows a single lysine to coordinate two nickel ions.

The protein resides in the cytoplasm. The enzyme catalyses urea + 2 H2O + H(+) = hydrogencarbonate + 2 NH4(+). The protein operates within nitrogen metabolism; urea degradation; CO(2) and NH(3) from urea (urease route): step 1/1. This Yersinia pseudotuberculosis serotype O:1b (strain IP 31758) protein is Urease subunit alpha.